Reading from the N-terminus, the 528-residue chain is Putative galacturonosyltransferase 2 (528 aa).

The protein belongs to the glycosyltransferase 8 family.

The protein operates within glycan metabolism; pectin biosynthesis. Its function is as follows. May be involved in pectin and/or xylans biosynthesis in cell walls. The sequence is that of Putative galacturonosyltransferase 2 (GAUT2) from Arabidopsis thaliana (Mouse-ear cress).